The primary structure comprises 571 residues: Proline--tRNA ligase (571 aa).

This sequence belongs to the class-II aminoacyl-tRNA synthetase family. ProS type 1 subfamily. Homodimer.

Its subcellular location is the cytoplasm. It carries out the reaction tRNA(Pro) + L-proline + ATP = L-prolyl-tRNA(Pro) + AMP + diphosphate. Catalyzes the attachment of proline to tRNA(Pro) in a two-step reaction: proline is first activated by ATP to form Pro-AMP and then transferred to the acceptor end of tRNA(Pro). As ProRS can inadvertently accommodate and process non-cognate amino acids such as alanine and cysteine, to avoid such errors it has two additional distinct editing activities against alanine. One activity is designated as 'pretransfer' editing and involves the tRNA(Pro)-independent hydrolysis of activated Ala-AMP. The other activity is designated 'posttransfer' editing and involves deacylation of mischarged Ala-tRNA(Pro). The misacylated Cys-tRNA(Pro) is not edited by ProRS. In Azotobacter vinelandii (strain DJ / ATCC BAA-1303), this protein is Proline--tRNA ligase.